We begin with the raw amino-acid sequence, 907 residues long: Putative ATP-dependent DNA helicase DDX11-like protein 8 (907 aa).

The region spanning 9-447 (GAIHFPFPFT…KNLMYLKQIL (439 aa)) is the Helicase ATP-binding domain. Residue 44 to 51 (SPTGTGKS) participates in ATP binding. Residues 202 to 222 (YESDEEKKVASGHRVDEDEDD) form a disordered region. The segment covering 206 to 217 (EEKKVASGHRVD) has biased composition (basic and acidic residues). Ser-264 carries the post-translational modification Phosphoserine. 2 residues coordinate [4Fe-4S] cluster: Cys-269 and Cys-287. Basic and acidic residues predominate over residues 291-306 (QRSRHEKKKGAEEEKP). The interval 291-314 (QRSRHEKKKGAEEEKPKRRRQEKQ) is disordered. Residues Cys-317 and Cys-352 each coordinate [4Fe-4S] cluster. Positions 395-398 (DEAH) match the DEAH motif.

The protein belongs to the DEAD box helicase family. DEAH subfamily. DDX11/CHL1 sub-subfamily. Requires [4Fe-4S] cluster as cofactor.

It localises to the nucleus. It is found in the nucleolus. Its function is as follows. Putative DNA helicase. This is Putative ATP-dependent DNA helicase DDX11-like protein 8 (DDX11L8) from Homo sapiens (Human).